The sequence spans 116 residues: Putative superoxide reductase (116 aa).

Positions 20, 46, 52, 101, and 104 each coordinate Fe cation.

It belongs to the desulfoferrodoxin family. Fe cation is required as a cofactor.

The catalysed reaction is reduced [rubredoxin] + superoxide + 2 H(+) = oxidized [rubredoxin] + H2O2. Its function is as follows. Uses electrons from reduced NADP, by way of rubredoxin and an oxidoreductase, to catalyze the reduction of superoxide to hydrogen peroxide. This chain is Putative superoxide reductase, found in Methanocaldococcus jannaschii (strain ATCC 43067 / DSM 2661 / JAL-1 / JCM 10045 / NBRC 100440) (Methanococcus jannaschii).